We begin with the raw amino-acid sequence, 308 residues long: Glutaminase 1 (308 aa).

Substrate-binding residues include Ser64, Asn116, Glu161, Asn168, Tyr192, Tyr244, and Val262.

It belongs to the glutaminase family. As to quaternary structure, homotetramer.

It carries out the reaction L-glutamine + H2O = L-glutamate + NH4(+). The protein is Glutaminase 1 of Halalkalibacterium halodurans (strain ATCC BAA-125 / DSM 18197 / FERM 7344 / JCM 9153 / C-125) (Bacillus halodurans).